Reading from the N-terminus, the 135-residue chain is ATP synthase epsilon chain (135 aa).

The interval 101 to 122 is disordered; that stretch reads TAVTKLEGQPSTPEKVKAQQLF.

This sequence belongs to the ATPase epsilon chain family. F-type ATPases have 2 components, CF(1) - the catalytic core - and CF(0) - the membrane proton channel. CF(1) has five subunits: alpha(3), beta(3), gamma(1), delta(1), epsilon(1). CF(0) has three main subunits: a, b and c.

It is found in the cellular thylakoid membrane. Produces ATP from ADP in the presence of a proton gradient across the membrane. The polypeptide is ATP synthase epsilon chain (Synechococcus sp. (strain CC9311)).